We begin with the raw amino-acid sequence, 477 residues long: MATARAKARGSEAGARCHRAPGPPPRPKARRTARRRRAETLTARRSRPSAGERRAGSQRAWSGAPRAAVFGDECARGALFKAWCVPCLVSLDTLQELCRKEKLTCKSIGITKRNLNNYEVEYLCDYKVAKGVEYYLVKWKGWPDSTNTWEPLRNLRCPQLLRQFSDDKKTYLAQERKCKAVNSKSLQPAIAEYIVQKAKQRIALQRWQDYLNRRKNHKGMIFVENTVDLEGPPLDFYYINEYRPAPGISINSEATFGCSCTDCFFDKCCPAEAGVVLAYNKKQQIKIQPGTPIYECNSRCRCGPECPNRIVQKGTQYSLCIFKTSNGCGWGVKTLVKIKRMSFVMEYVGEVITSEEAERRGQFYDNKGITYLFDLDYESDEFTVDAARYGNVSHFVNHSCDPNLQVFSVFIDNLDTRLPRIALFSTRTINAGEELTFDYQMKGSGEASSDSIDHSPAKKRVRTQCKCGAETCRGYLN.

The segment at 1-59 (MATARAKARGSEAGARCHRAPGPPPRPKARRTARRRRAETLTARRSRPSAGERRAGSQR) is disordered. The span at 27 to 37 (PKARRTARRRR) shows a compositional bias: basic residues. The Chromo domain occupies 118 to 176 (YEVEYLCDYKVAKGVEYYLVKWKGWPDSTNTWEPLRNLRCPQLLRQFSDDKKTYLAQER). The region spanning 256–314 (FGCSCTDCFFDKCCPAEAGVVLAYNKKQQIKIQPGTPIYECNSRCRCGPECPNRIVQKG) is the Pre-SET domain. Zn(2+)-binding residues include Cys-258, Cys-260, Cys-263, Cys-268, Cys-269, Cys-296, Cys-300, Cys-302, and Cys-306. One can recognise an SET domain in the interval 317–440 (YSLCIFKTSN…AGEELTFDYQ (124 aa)). S-adenosyl-L-methionine-binding positions include 328-330 (CGW), Tyr-371, and 397-398 (NH). Cys-400 serves as a coordination point for Zn(2+). Ser-448, Ser-451, and Ser-455 each carry phosphoserine. One can recognise a Post-SET domain in the interval 461–477 (VRTQCKCGAETCRGYLN). Zn(2+)-binding residues include Cys-465, Cys-467, and Cys-472.

Belongs to the class V-like SAM-binding methyltransferase superfamily. Histone-lysine methyltransferase family. Suvar3-9 subfamily. As to quaternary structure, interacts with SMAD5. The large PER complex involved in the histone methylation is composed of at least PER2, CBX3, TRIM28, SUV39H1 and/or SUV39H2; CBX3 mediates the formation of the complex. Ubiquitinated by the DCX(DCAF13) E3 ubiquitin ligase complex, leading to its degradation. In terms of tissue distribution, testis specific; predominant expression in type B spermatogonia and preleptotene spermatocytes.

The protein localises to the nucleus. It is found in the chromosome. Its subcellular location is the centromere. It carries out the reaction L-lysyl(9)-[histone H3] + 3 S-adenosyl-L-methionine = N(6),N(6),N(6)-trimethyl-L-lysyl(9)-[histone H3] + 3 S-adenosyl-L-homocysteine + 3 H(+). Functionally, histone methyltransferase that specifically trimethylates 'Lys-9' of histone H3 using monomethylated H3 'Lys-9' as substrate. H3 'Lys-9' trimethylation represents a specific tag for epigenetic transcriptional repression by recruiting HP1 (CBX1, CBX3 and/or CBX5) proteins to methylated histones. Mainly functions in heterochromatin regions, thereby playing a central role in the establishment of constitutive heterochromatin at pericentric and telomere regions. H3 'Lys-9' trimethylation is also required to direct DNA methylation at pericentric repeats. SUV39H1 is targeted to histone H3 via its interaction with RB1 and is involved in many processes, such as cell cycle regulation, transcriptional repression and regulation of telomere length. May participate in regulation of higher-order chromatin organization during spermatogenesis. Recruited by the large PER complex to the E-box elements of the circadian target genes such as PER2 itself or PER1, contributes to the conversion of local chromatin to a heterochromatin-like repressive state through H3 'Lys-9' trimethylation. The protein is Histone-lysine N-methyltransferase SUV39H2 (Suv39h2) of Mus musculus (Mouse).